The primary structure comprises 142 residues: Large ribosomal subunit protein uL11 (142 aa).

It belongs to the universal ribosomal protein uL11 family. In terms of assembly, part of the ribosomal stalk of the 50S ribosomal subunit. Interacts with L10 and the large rRNA to form the base of the stalk. L10 forms an elongated spine to which L12 dimers bind in a sequential fashion forming a multimeric L10(L12)X complex. Post-translationally, one or more lysine residues are methylated.

Forms part of the ribosomal stalk which helps the ribosome interact with GTP-bound translation factors. This chain is Large ribosomal subunit protein uL11, found in Citrobacter koseri (strain ATCC BAA-895 / CDC 4225-83 / SGSC4696).